Consider the following 484-residue polypeptide: Poly(A) RNA polymerase GLD2 (484 aa).

Phosphoserine occurs at positions 62 and 69. The disordered stretch occupies residues 72-97; the sequence is FRGRKRLSDEKNLPLDGKRQRFHSPH. A Nuclear localization signal motif is present at residues 76-92; the sequence is KRLSDEKNLPLDGKRQR. Positions 77–90 are enriched in basic and acidic residues; sequence RLSDEKNLPLDGKR. Residue serine 95 is modified to Phosphoserine. Residues aspartate 213 and aspartate 215 each coordinate Mg(2+). The region spanning 386–440 is the PAP-associated domain; that stretch reads NLGDLLLGFLKYYATEFDWNSQMISVREAKAIPRPDGIEWRNKYICVEEPFDGTN.

Belongs to the DNA polymerase type-B-like family. GLD2 subfamily. As to quaternary structure, interacts with CPEB1, CPEB2, CPSF1 and PABPC1. Interacts with QKI isoform QKI7; promoting recruitment to miRNA miR-122 and miR-122 stabilization. It depends on Mg(2+) as a cofactor. Requires Mn(2+) as cofactor. In terms of tissue distribution, expressed in brain. Within brain, it is expressed in cerebellum, hippocampus and medulla.

It localises to the cytoplasm. It is found in the nucleus. The enzyme catalyses RNA(n) + ATP = RNA(n)-3'-adenine ribonucleotide + diphosphate. Cytoplasmic poly(A) RNA polymerase that adds successive AMP monomers to the 3'-end of specific RNAs, forming a poly(A) tail. In contrast to the canonical nuclear poly(A) RNA polymerase, it only adds poly(A) to selected cytoplasmic mRNAs. Does not play a role in replication-dependent histone mRNA degradation. Adds a single nucleotide to the 3' end of specific miRNAs, monoadenylation stabilizes and prolongs the activity of some but not all miRNAs. The polypeptide is Poly(A) RNA polymerase GLD2 (Homo sapiens (Human)).